Consider the following 718-residue polypeptide: ATP-dependent RNA helicase homolog DQX1 (718 aa).

Positions 54 to 222 (HLESSPTGVV…WGNSPIVRVP (169 aa)) constitute a Helicase ATP-binding domain. ATP is bound at residue 67-74 (GDPGSGKS). The short motif at 167-170 (DEAQ) is the DEAQ box element. In terms of domain architecture, Helicase C-terminal spans 245–447 (ACQAVLELCQ…ALMRALEDLD (203 aa)). The interval 690-718 (QLREGTAEPPAAATETSSPQEYGDGCVLQ) is disordered. Over residues 696 to 708 (AEPPAAATETSSP) the composition is skewed to low complexity.

As to expression, ubiquitous.

It is found in the nucleus. Might be involved in RNA metabolism; it is missing helicase motif III and may not have helicase activity. The sequence is that of ATP-dependent RNA helicase homolog DQX1 (Dqx1) from Mus musculus (Mouse).